The chain runs to 233 residues: Large ribosomal subunit protein uL1 (233 aa).

Belongs to the universal ribosomal protein uL1 family. As to quaternary structure, part of the 50S ribosomal subunit.

In terms of biological role, binds directly to 23S rRNA. The L1 stalk is quite mobile in the ribosome, and is involved in E site tRNA release. Its function is as follows. Protein L1 is also a translational repressor protein, it controls the translation of the L11 operon by binding to its mRNA. In Campylobacter concisus (strain 13826), this protein is Large ribosomal subunit protein uL1.